The chain runs to 88 residues: UPF0237 protein SMU_72 (88 aa).

Residues 4 to 77 (IITVVGKDRT…ETLNVKINIQ (74 aa)) enclose the ACT domain.

Belongs to the UPF0237 family. Homodimer.

The sequence is that of UPF0237 protein SMU_72 from Streptococcus mutans serotype c (strain ATCC 700610 / UA159).